Reading from the N-terminus, the 468-residue chain is Plant UBX domain-containing protein 7 (468 aa).

Met1 carries the post-translational modification N-acetylmethionine. The region spanning 7–48 (SGDQQRLVSSFLEIAVGQTAETARQFLQATSWKLEEAIQLFY) is the UBA-like domain. Disordered regions lie at residues 138–168 (KSPG…SAPR) and 299–329 (HFAS…KDEE). The span at 150 to 166 (SSASASASASASESASA) shows a compositional bias: low complexity. One can recognise a UIM domain in the interval 328–347 (EEEEELQRALAASLEDNNMK). In terms of domain architecture, UBX spans 385-466 (DRSLQCRVGI…GVANSMISAT (82 aa)).

As to quaternary structure, interacts with CDC48A via its UBX domain and with ubiquitin via its N-terminal UBA-like domain. Expressed broadly in sporophyte and gametophyte cells.

The protein resides in the nucleus. Functionally, acts as a bridge between CDC48A and ubiquitin, suggesting a role in targeted protein degradation. The protein is Plant UBX domain-containing protein 7 of Arabidopsis thaliana (Mouse-ear cress).